Here is a 359-residue protein sequence, read N- to C-terminus: 3-dehydroquinate synthase (359 aa).

Residues 69-74, 103-107, 127-128, lysine 140, lysine 149, and 167-170 contribute to the NAD(+) site; these read DGEQHK, GVIGD, TT, and TLDT. Zn(2+) is bound by residues glutamate 182, histidine 245, and histidine 262.

This sequence belongs to the sugar phosphate cyclases superfamily. Dehydroquinate synthase family. It depends on Co(2+) as a cofactor. The cofactor is Zn(2+). NAD(+) is required as a cofactor.

The protein resides in the cytoplasm. The enzyme catalyses 7-phospho-2-dehydro-3-deoxy-D-arabino-heptonate = 3-dehydroquinate + phosphate. It functions in the pathway metabolic intermediate biosynthesis; chorismate biosynthesis; chorismate from D-erythrose 4-phosphate and phosphoenolpyruvate: step 2/7. Catalyzes the conversion of 3-deoxy-D-arabino-heptulosonate 7-phosphate (DAHP) to dehydroquinate (DHQ). This is 3-dehydroquinate synthase from Nitrosococcus oceani (strain ATCC 19707 / BCRC 17464 / JCM 30415 / NCIMB 11848 / C-107).